Here is a 534-residue protein sequence, read N- to C-terminus: Steroid hormone receptor family member cnr14 (534 aa).

Disordered stretches follow at residues 30-53 and 119-139; these read SGKTASIPSSEASKPEGTNGQWSH and PATSVTSSLSPPDSLSNGHTT. The segment covering 119–130 has biased composition (low complexity); that stretch reads PATSVTSSLSPP. Positions 148-223 form a DNA-binding region, nuclear receptor; that stretch reads ISFCKVCGDK…SGMSKDSVRQ (76 aa). 2 consecutive NR C4-type zinc fingers follow at residues 151–171 and 187–211; these read CKVCGDKASGYHYGVTSCEGC and CLKQQVCEIKRESRNRCQYCRFKKC. The region spanning 252 to 493 is the NR LBD domain; the sequence is EVDAVYEAVL…PPLVVEMFQL (242 aa). A disordered region spans residues 502 to 534; it reads HNNQENQYTPAPEHQSPQPQQPTPNQQQTPVHC. Residues 511–534 are compositionally biased toward low complexity; sequence PAPEHQSPQPQQPTPNQQQTPVHC.

Belongs to the nuclear hormone receptor family. NR1 subfamily. In terms of tissue distribution, most abundant in embryos.

The protein localises to the nucleus. Its function is as follows. Transcriptional regulator which is involved in the sex determination and X chromosome dosage compensation pathways. Directly binds to five 5'-A(G/C)(G/T)(T/G)C(A/G)-3' sites in the promoter of sex-determining factor xol-1 to negatively regulate its expression and promote hermaphrodite development. Together with fox-1 is involved in making the distinction between one and two X-chromosomes. Plays a role in the fox-1-mediated repression of the functionally active isoform (isoform b) of the sex-determining factor xol-1 gene to promote hermaphrodite development. Plays a role in the association of the dosage compensation complex proteins dpy-27 and sdc-3 with the hermaphrodite X chromosomes. In Caenorhabditis elegans, this protein is Steroid hormone receptor family member cnr14.